A 139-amino-acid chain; its full sequence is Putative nickel-responsive regulator (139 aa).

Positions 77, 88, 90, and 96 each coordinate Ni(2+).

This sequence belongs to the transcriptional regulatory CopG/NikR family. Ni(2+) serves as cofactor.

Its function is as follows. Transcriptional regulator. This chain is Putative nickel-responsive regulator, found in Haloarcula marismortui (strain ATCC 43049 / DSM 3752 / JCM 8966 / VKM B-1809) (Halobacterium marismortui).